A 120-amino-acid chain; its full sequence is Large ribosomal subunit protein uL18 (120 aa).

The protein belongs to the universal ribosomal protein uL18 family. Part of the 50S ribosomal subunit; part of the 5S rRNA/L5/L18/L25 subcomplex. Contacts the 5S and 23S rRNAs.

In terms of biological role, this is one of the proteins that bind and probably mediate the attachment of the 5S RNA into the large ribosomal subunit, where it forms part of the central protuberance. This is Large ribosomal subunit protein uL18 from Exiguobacterium sp. (strain ATCC BAA-1283 / AT1b).